A 156-amino-acid polypeptide reads, in one-letter code: Small ribosomal subunit protein uS7 (156 aa).

Belongs to the universal ribosomal protein uS7 family. In terms of assembly, part of the 30S ribosomal subunit. Contacts proteins S9 and S11.

In terms of biological role, one of the primary rRNA binding proteins, it binds directly to 16S rRNA where it nucleates assembly of the head domain of the 30S subunit. Is located at the subunit interface close to the decoding center, probably blocks exit of the E-site tRNA. The chain is Small ribosomal subunit protein uS7 from Mycobacterium tuberculosis (strain CDC 1551 / Oshkosh).